Here is an 87-residue protein sequence, read N- to C-terminus: Probable Fe(2+)-trafficking protein (87 aa).

The protein belongs to the Fe(2+)-trafficking protein family.

Its function is as follows. Could be a mediator in iron transactions between iron acquisition and iron-requiring processes, such as synthesis and/or repair of Fe-S clusters in biosynthetic enzymes. This chain is Probable Fe(2+)-trafficking protein, found in Francisella tularensis subsp. holarctica (strain FTNF002-00 / FTA).